A 159-amino-acid chain; its full sequence is Phosphopantetheine adenylyltransferase (159 aa).

Threonine 10 is a substrate binding site. ATP contacts are provided by residues 10-11 and histidine 18; that span reads TF. 3 residues coordinate substrate: lysine 42, methionine 74, and arginine 88. ATP-binding positions include 89–91, glutamate 99, and 124–130; these read GLR and WSFISSS.

The protein belongs to the bacterial CoaD family. In terms of assembly, homohexamer. Mg(2+) serves as cofactor.

Its subcellular location is the cytoplasm. It catalyses the reaction (R)-4'-phosphopantetheine + ATP + H(+) = 3'-dephospho-CoA + diphosphate. It participates in cofactor biosynthesis; coenzyme A biosynthesis; CoA from (R)-pantothenate: step 4/5. In terms of biological role, reversibly transfers an adenylyl group from ATP to 4'-phosphopantetheine, yielding dephospho-CoA (dPCoA) and pyrophosphate. The polypeptide is Phosphopantetheine adenylyltransferase (Salmonella typhimurium (strain LT2 / SGSC1412 / ATCC 700720)).